Here is a 307-residue protein sequence, read N- to C-terminus: Small ribosomal subunit biogenesis GTPase RsgA (307 aa).

Residues 78 to 240 (HKTAFGHLIA…VIDTPGIKEL (163 aa)) form the CP-type G domain. Residues 128 to 131 (NKSD) and 182 to 190 (GHSGVGKST) contribute to the GTP site. Zn(2+)-binding residues include C264, C269, H271, and C277.

It belongs to the TRAFAC class YlqF/YawG GTPase family. RsgA subfamily. Monomer. Associates with 30S ribosomal subunit, binds 16S rRNA. Zn(2+) serves as cofactor.

The protein localises to the cytoplasm. Its function is as follows. One of several proteins that assist in the late maturation steps of the functional core of the 30S ribosomal subunit. Helps release RbfA from mature subunits. May play a role in the assembly of ribosomal proteins into the subunit. Circularly permuted GTPase that catalyzes slow GTP hydrolysis, GTPase activity is stimulated by the 30S ribosomal subunit. The chain is Small ribosomal subunit biogenesis GTPase RsgA from Cytophaga hutchinsonii (strain ATCC 33406 / DSM 1761 / CIP 103989 / NBRC 15051 / NCIMB 9469 / D465).